We begin with the raw amino-acid sequence, 399 residues long: Succinate--CoA ligase [ADP-forming] subunit beta (399 aa).

An ATP-grasp domain is found at 9 to 254 (KELLAKYGVG…ETEEDPAEIE (246 aa)). Residues Lys46, 53 to 55 (GRG), Val112, and Glu117 each bind ATP. Mg(2+)-binding residues include Asn209 and Asp223. Substrate contacts are provided by residues Asn274 and 331-333 (GIM).

The protein belongs to the succinate/malate CoA ligase beta subunit family. Heterotetramer of two alpha and two beta subunits. Mg(2+) is required as a cofactor.

It catalyses the reaction succinate + ATP + CoA = succinyl-CoA + ADP + phosphate. It carries out the reaction GTP + succinate + CoA = succinyl-CoA + GDP + phosphate. It functions in the pathway carbohydrate metabolism; tricarboxylic acid cycle; succinate from succinyl-CoA (ligase route): step 1/1. Its function is as follows. Succinyl-CoA synthetase functions in the citric acid cycle (TCA), coupling the hydrolysis of succinyl-CoA to the synthesis of either ATP or GTP and thus represents the only step of substrate-level phosphorylation in the TCA. The beta subunit provides nucleotide specificity of the enzyme and binds the substrate succinate, while the binding sites for coenzyme A and phosphate are found in the alpha subunit. The chain is Succinate--CoA ligase [ADP-forming] subunit beta from Novosphingobium aromaticivorans (strain ATCC 700278 / DSM 12444 / CCUG 56034 / CIP 105152 / NBRC 16084 / F199).